A 130-amino-acid chain; its full sequence is Protein MGF 360-1L (130 aa).

The next 3 membrane-spanning stretches (helical) occupy residues 4–24 (FLGFLLLSYLAIILVHDNVNC), 75–95 (IIRHCCFYLVFSIAFASCVAF), and 109–129 (LLGLLSILVWLAQPVLNQPFP).

The protein belongs to the asfivirus MGF 110 family.

Its subcellular location is the host membrane. Plays a role in virus cell tropism, and may be required for efficient virus replication in macrophages. The protein is Protein MGF 360-1L of Ornithodoros (relapsing fever ticks).